We begin with the raw amino-acid sequence, 64 residues long: Large ribosomal subunit protein uL29 (64 aa).

Belongs to the universal ribosomal protein uL29 family.

This Burkholderia ambifaria (strain MC40-6) protein is Large ribosomal subunit protein uL29.